Here is a 376-residue protein sequence, read N- to C-terminus: Ribonucleoside-diphosphate reductase 1 subunit beta (376 aa).

Residues aspartate 85, glutamate 116, and histidine 119 each coordinate Fe cation. The active site involves tyrosine 123. Residues glutamate 205, glutamate 239, and histidine 242 each coordinate Fe cation.

The protein belongs to the ribonucleoside diphosphate reductase small chain family. Tetramer of two alpha (R1) and two beta (R2) subunits. The B1 protein is a dimer of alpha subunits. A radical transfer pathway occurs between Tyr-123 of R2 and R1. Fe cation serves as cofactor.

The enzyme catalyses a 2'-deoxyribonucleoside 5'-diphosphate + [thioredoxin]-disulfide + H2O = a ribonucleoside 5'-diphosphate + [thioredoxin]-dithiol. Its function is as follows. Provides the precursors necessary for DNA synthesis. Catalyzes the biosynthesis of deoxyribonucleotides from the corresponding ribonucleotides. R2 contains the tyrosyl radical required for catalysis. This Escherichia coli O157:H7 protein is Ribonucleoside-diphosphate reductase 1 subunit beta (nrdB).